Here is a 338-residue protein sequence, read N- to C-terminus: Eukaryotic translation initiation factor 3 subunit H (338 aa).

Residues 22 to 154 (VQCDGLAVMK…LKAYRLTPQA (133 aa)) enclose the MPN domain.

The protein belongs to the eIF-3 subunit H family. As to quaternary structure, component of the eukaryotic translation initiation factor 3 (eIF-3) complex. The eIF-3 complex interacts with pix. Interacts with mxt.

Its subcellular location is the cytoplasm. Component of the eukaryotic translation initiation factor 3 (eIF-3) complex, which is involved in protein synthesis of a specialized repertoire of mRNAs and, together with other initiation factors, stimulates binding of mRNA and methionyl-tRNAi to the 40S ribosome. The eIF-3 complex specifically targets and initiates translation of a subset of mRNAs involved in cell proliferation. This Drosophila yakuba (Fruit fly) protein is Eukaryotic translation initiation factor 3 subunit H.